The following is a 154-amino-acid chain: MKCPFCGHAATQVIDTRMSEEGDTVRRRRRCESCDRRFTTYERIELFFPAVVKKNGSRVDYDRNKVKDSMRLALRKRPVSAEAIDEAIARIEEKLLSHGEKEIGSDRVGELVMRELKRLDKIGYIRFASVYRSFEDLAEFRDVLDEVAATNVRK.

A zinc finger spans residues 3–34 (CPFCGHAATQVIDTRMSEEGDTVRRRRRCESC). The region spanning 49 to 139 (PAVVKKNGSR…VYRSFEDLAE (91 aa)) is the ATP-cone domain.

This sequence belongs to the NrdR family. It depends on Zn(2+) as a cofactor.

Functionally, negatively regulates transcription of bacterial ribonucleotide reductase nrd genes and operons by binding to NrdR-boxes. The sequence is that of Transcriptional repressor NrdR from Ralstonia pickettii (strain 12J).